We begin with the raw amino-acid sequence, 149 residues long: Extracellular protease inhibitor 1 (149 aa).

The N-terminal stretch at 1–16 (MKSALLFTLVVAAVHA) is a signal peptide. 2 Kazal-like domains span residues 29–86 (ESNE…SSTG) and 88–141 (QPPS…ACVG). 2 cysteine pairs are disulfide-bonded: Cys-35/Cys-65 and Cys-39/Cys-58. An N-linked (GlcNAc...) asparagine glycan is attached at Asn-67. 3 cysteine pairs are disulfide-bonded: Cys-94-Cys-124, Cys-98-Cys-117, and Cys-106-Cys-139.

Interacts with host subtilisin-like protease P69B.

The protein resides in the secreted. Its function is as follows. Secreted effector that interacts with and inhibits the pathogenesis-related P69B subtilisin-like serine protease of host tomato. Inhibition of host proteases by a pathogen extracellular protease inhibitor forms a specific type of defense-counterdefense mechanism between plants and microbial pathogens. This chain is Extracellular protease inhibitor 1, found in Phytophthora infestans (Potato late blight agent).